The following is a 149-amino-acid chain: 3-dehydroquinate dehydratase (149 aa).

The active-site Proton acceptor is Tyr26. Substrate contacts are provided by Asn77, His83, and Asp90. His103 serves as the catalytic Proton donor. Residues 104-105 (LS) and Arg114 contribute to the substrate site.

Belongs to the type-II 3-dehydroquinase family. Homododecamer.

The catalysed reaction is 3-dehydroquinate = 3-dehydroshikimate + H2O. It functions in the pathway metabolic intermediate biosynthesis; chorismate biosynthesis; chorismate from D-erythrose 4-phosphate and phosphoenolpyruvate: step 3/7. Catalyzes a trans-dehydration via an enolate intermediate. The sequence is that of 3-dehydroquinate dehydratase from Haemophilus influenzae (strain PittGG).